The sequence spans 339 residues: Homocysteine S-methyltransferase 2 (339 aa).

The Hcy-binding domain occupies 12 to 326 (AVRRWVDAAG…NTIRAIHRTL (315 aa)). 3 residues coordinate Zn(2+): C244, C311, and C312.

Monomer. Zn(2+) serves as cofactor.

It carries out the reaction S-methyl-L-methionine + L-homocysteine = 2 L-methionine + H(+). Catalyzes methyl transfer from S-methylmethionine (SMM) to adenosyl-L-homocysteine (AdoMet). SMM degradation (by HMT-1, HMT-2, HMT-3 and HMT-4) and biosynthesis (by MMT1) constitute the SMM cycle in plants, which is probably required to achieve short term control of AdoMet level. In Zea mays (Maize), this protein is Homocysteine S-methyltransferase 2 (HMT-2).